A 409-amino-acid chain; its full sequence is N-acetylglucosamine-6-phosphate deacetylase (409 aa).

E143 provides a ligand contact to a divalent metal cation. Residue 154-155 (AH) participates in substrate binding. A divalent metal cation-binding residues include H211 and H232. Substrate contacts are provided by residues 235 to 236 (NA), R243, and 269 to 272 (DGTH). Catalysis depends on D294, which acts as the Proton donor/acceptor. A substrate-binding site is contributed by 328 to 330 (LSG).

The protein belongs to the metallo-dependent hydrolases superfamily. NagA family. The cofactor is a divalent metal cation.

It catalyses the reaction N-acetyl-D-glucosamine 6-phosphate + H2O = D-glucosamine 6-phosphate + acetate. It participates in amino-sugar metabolism; N-acetylneuraminate degradation. In terms of biological role, hydrolyzes the N-glycolyl group from N-glycolylglucosamine 6-phosphate (GlcNGc-6-P) in the N-glycolylneuraminic acid (Neu5Gc) degradation pathway. Although human is not able to catalyze formation of Neu5Gc due to the inactive CMAHP enzyme, Neu5Gc is present in food and must be degraded. This chain is N-acetylglucosamine-6-phosphate deacetylase (AMDHD2), found in Homo sapiens (Human).